Reading from the N-terminus, the 430-residue chain is Enolase (430 aa).

Residue glutamine 167 participates in (2R)-2-phosphoglycerate binding. Glutamate 209 functions as the Proton donor in the catalytic mechanism. Aspartate 246, glutamate 287, and aspartate 314 together coordinate Mg(2+). (2R)-2-phosphoglycerate-binding residues include lysine 339, arginine 368, serine 369, and lysine 390. Lysine 339 (proton acceptor) is an active-site residue.

This sequence belongs to the enolase family. Mg(2+) is required as a cofactor.

The protein localises to the cytoplasm. Its subcellular location is the secreted. The protein resides in the cell surface. It catalyses the reaction (2R)-2-phosphoglycerate = phosphoenolpyruvate + H2O. It participates in carbohydrate degradation; glycolysis; pyruvate from D-glyceraldehyde 3-phosphate: step 4/5. Catalyzes the reversible conversion of 2-phosphoglycerate (2-PG) into phosphoenolpyruvate (PEP). It is essential for the degradation of carbohydrates via glycolysis. This chain is Enolase, found in Prochlorococcus marinus (strain MIT 9515).